A 149-amino-acid chain; its full sequence is FAD synthase (149 aa).

Residues 9 to 10 (VF), 14 to 17 (HPGH), Asp93, and Tyr120 contribute to the ATP site.

Belongs to the archaeal FAD synthase family. In terms of assembly, homodimer. A divalent metal cation is required as a cofactor.

It carries out the reaction FMN + ATP + H(+) = FAD + diphosphate. Its pathway is cofactor biosynthesis; FAD biosynthesis; FAD from FMN: step 1/1. Functionally, catalyzes the transfer of the AMP portion of ATP to flavin mononucleotide (FMN) to produce flavin adenine dinucleotide (FAD) coenzyme. The polypeptide is FAD synthase (Aciduliprofundum boonei (strain DSM 19572 / T469)).